The following is an 843-amino-acid chain: Eisosome protein 1 (843 aa).

The tract at residues 1-53 (MSLISAVEDRDIHNIGKTSGGGSRTSSITSSKKSLKHGSKSLRKPKVYQTTGE) is disordered. Residue Ser2 is modified to N-acetylserine. Residue Ser2 is modified to Phosphoserine. Residues 33–46 (KSLKHGSKSLRKPK) show a composition bias toward basic residues. 2 positions are modified to phosphoserine: Ser88 and Ser130. Residues 120–174 (KMGPKVVRNNSITSATSKTSKESQTKRKSKESPGAAASKAYSMTMETTSLSSQTN) form a disordered region. Composition is skewed to polar residues over residues 127 to 137 (RNNSITSATSK) and 163 to 174 (TMETTSLSSQTN). Residues Ser182, Ser401, Ser584, and Ser710 each carry the phosphoserine modification. A disordered region spans residues 717 to 843 (DLPTQLEKIE…QDAISNQEKK (127 aa)). Thr720 carries the post-translational modification Phosphothreonine. Residues 752–764 (STAAKEATETSSA) are compositionally biased toward low complexity. Ser763 and Ser775 each carry phosphoserine. A compositionally biased stretch (basic and acidic residues) spans 781–797 (SGKEDANDCKSAEHSKE). The span at 798–810 (ISVSQKAGNNKSL) shows a compositional bias: polar residues. 4 positions are modified to phosphoserine: Ser816, Ser828, Ser829, and Ser838.

It belongs to the EIS1 family.

Its subcellular location is the cytoplasmic granule. It is found in the cell membrane. Functionally, required for normal formation of eisosomes, large cytoplasmic protein assemblies that localize to specialized domains on plasma membrane and mark the site of endocytosis. This Saccharomyces cerevisiae (strain ATCC 204508 / S288c) (Baker's yeast) protein is Eisosome protein 1 (EIS1).